A 415-amino-acid polypeptide reads, in one-letter code: Lipid-A-disaccharide synthase (415 aa).

The segment at 1–21 is disordered; sequence MNSLPESGSDGQSSADPSQKA.

The protein belongs to the LpxB family.

The catalysed reaction is a lipid X + a UDP-2-N,3-O-bis[(3R)-3-hydroxyacyl]-alpha-D-glucosamine = a lipid A disaccharide + UDP + H(+). It functions in the pathway bacterial outer membrane biogenesis; LPS lipid A biosynthesis. In terms of biological role, condensation of UDP-2,3-diacylglucosamine and 2,3-diacylglucosamine-1-phosphate to form lipid A disaccharide, a precursor of lipid A, a phosphorylated glycolipid that anchors the lipopolysaccharide to the outer membrane of the cell. The polypeptide is Lipid-A-disaccharide synthase (Gluconobacter oxydans (strain 621H) (Gluconobacter suboxydans)).